The sequence spans 592 residues: Craniofacial development protein 2 (592 aa).

A compositionally biased stretch (basic and acidic residues) spans 1-16 (MEEFDSKDISTSKDED). 2 disordered regions span residues 1 to 225 (MEEF…KGQS) and 499 to 592 (VTNE…DCNN). Positions 25–42 (HEDDINELVKEDEVDGEE) are enriched in acidic residues. 2 stretches are compositionally biased toward basic and acidic residues: residues 78–108 (SRES…RQEE) and 147–162 (KVEE…EVKL). A compositionally biased stretch (polar residues) spans 175–184 (LTQQGRLSGR). Composition is skewed to basic and acidic residues over residues 185 to 207 (TSED…RRAD), 508 to 523 (EEAK…EKPE), 552 to 562 (SVFKQDEKDKP), and 580 to 592 (EKCD…DCNN). A hydrophilic region spans residues 499-578 (VTNEEDATNE…SVPSLPAGSG (80 aa)).

Phosphorylated by CK2 (casein kinase II) in vitro. As to expression, expressed in liver and lung with higher expression in brain.

The protein resides in the cytoplasm. It localises to the nucleus. The polypeptide is Craniofacial development protein 2 (CFDP2) (Bos taurus (Bovine)).